Here is a 573-residue protein sequence, read N- to C-terminus: Phosphomethylpyrimidine synthase (573 aa).

Substrate is bound by residues N190, M219, Y248, H284, 304–306, 345–348, and E384; these read SRG and DGLR. H388 provides a ligand contact to Zn(2+). Substrate is bound at residue Y411. Residue H452 participates in Zn(2+) binding. 3 residues coordinate [4Fe-4S] cluster: C532, C535, and C540.

Belongs to the ThiC family. The cofactor is [4Fe-4S] cluster.

The enzyme catalyses 5-amino-1-(5-phospho-beta-D-ribosyl)imidazole + S-adenosyl-L-methionine = 4-amino-2-methyl-5-(phosphooxymethyl)pyrimidine + CO + 5'-deoxyadenosine + formate + L-methionine + 3 H(+). It functions in the pathway cofactor biosynthesis; thiamine diphosphate biosynthesis. Catalyzes the synthesis of the hydroxymethylpyrimidine phosphate (HMP-P) moiety of thiamine from aminoimidazole ribotide (AIR) in a radical S-adenosyl-L-methionine (SAM)-dependent reaction. The protein is Phosphomethylpyrimidine synthase of Geobacillus sp. (strain WCH70).